The sequence spans 264 residues: tRNA (guanine-N(1)-)-methyltransferase (264 aa).

Residues glycine 113 and 133–138 (IGDYVL) contribute to the S-adenosyl-L-methionine site. Residues 244-264 (VQQAATPGGQRRPPWHRDSRA) form a disordered region.

Belongs to the RNA methyltransferase TrmD family. As to quaternary structure, homodimer.

It is found in the cytoplasm. It catalyses the reaction guanosine(37) in tRNA + S-adenosyl-L-methionine = N(1)-methylguanosine(37) in tRNA + S-adenosyl-L-homocysteine + H(+). Functionally, specifically methylates guanosine-37 in various tRNAs. The sequence is that of tRNA (guanine-N(1)-)-methyltransferase from Frankia alni (strain DSM 45986 / CECT 9034 / ACN14a).